The primary structure comprises 465 residues: D-arabinitol 4-dehydrogenase (465 aa).

Belongs to the mannitol dehydrogenase family.

The enzyme catalyses D-arabinitol + NAD(+) = D-xylulose + NADH + H(+). Its pathway is carbohydrate metabolism; D-arabinitol metabolism. The chain is D-arabinitol 4-dehydrogenase (dalD) from Ralstonia nicotianae (strain ATCC BAA-1114 / GMI1000) (Ralstonia solanacearum).